A 2171-amino-acid chain; its full sequence is ATP-binding cassette sub-family C member Sur (2171 aa).

Topologically, residues 1-36 (MKQLFNIIHCDHLNGHVRSIYDNLNTDICGIDRVRR) are extracellular. A helical membrane pass occupies residues 37 to 57 (VFTFFSIFLLLFGLMFVCSRY). The Cytoplasmic portion of the chain corresponds to 58-71 (KKCHKTLLTFHNGR). A helical membrane pass occupies residues 72 to 92 (AAISLLLLALNSFDLARIFLP). The Extracellular segment spans residues 93-112 (HQNVRNLNRLFQSSPRDLNY). A helical transmembrane segment spans residues 113–133 (LVVIGSGELWNALFSTLLTLM). The Cytoplasmic portion of the chain corresponds to 134–145 (LMLYHRMVERKK). A helical transmembrane segment spans residues 146–166 (ATVFLYASTAVEALTFALLSN). The Extracellular segment spans residues 167–182 (ELFELVRYEDFLELQT). Residues 183–203 (CLVAMSAMCMVSLAMLDGLTV) form a helical membrane-spanning segment. The Cytoplasmic portion of the chain corresponds to 204-224 (YKECYHDDYLDDYGKIGYKHS). The chain crosses the membrane as a helical span at residues 225–245 (MATFYSKSCFWWLTPLLWLGY). Topologically, residues 246 to 299 (KEPLELEDLGQMKLEDSARSHYDHFLYIYTEKKKKSNSSPSLWYCYIKNSWQMF) are extracellular. Residues 300–320 (ALGGILKLAGDLFALIGPLAI) form a helical membrane-spanning segment. Residues 321–447 (QKIVEYIEQL…MTEDTRNIME (127 aa)) lie on the Cytoplasmic side of the membrane. Residues 344–622 (NEVANVLLST…FPITVPIIIA (279 aa)) form the ABC transmembrane type-1 1 domain. Residues 388–434 (DSSDSAGQVQSTSSTSDEKQKNDDSMATPEHVDNPSEPNISHDIGSI) form a disordered region. Polar residues predominate over residues 389–402 (SSDSAGQVQSTSST). Over residues 403-421 (SDEKQKNDDSMATPEHVDN) the composition is skewed to basic and acidic residues. Residues 448-468 (FFLIIHYAWAIPFKIAVVIYL) traverse the membrane as a helical segment. At 469-474 (LYMNLG) the chain is on the extracellular side. The chain crosses the membrane as a helical span at residues 475–495 (ISAVIGSIACIVIMTPLQFFI). The Cytoplasmic portion of the chain corresponds to 496–562 (GNAMSKNAEV…KDATFWTLMA (67 aa)). The chain crosses the membrane as a helical span at residues 563–583 (VLTHIATVLITFVTLGVYVWL). At 584–600 (HRDQEFDLNASRLFSSL) the chain is on the extracellular side. A helical membrane pass occupies residues 601-621 (ALFQQLTVPLLIFPITVPIII). Over 622 to 1409 (AARVSTRRLE…KYGKISDDIY (788 aa)) the chain is Cytoplasmic. One can recognise an ABC transporter 1 domain in the interval 785 to 1014 (VSINDGLFTW…QPRITAEWNA (230 aa)). An ATP-binding site is contributed by 822–829 (GKNGSGKT). A compositionally biased stretch (basic residues) spans 1141-1151 (RRRHTLGRRGS). Disordered regions lie at residues 1141 to 1177 (RRRHTLGRRGSRNTNSSHRLSGLSTLTATSESSSISG) and 1209 to 1265 (PRVQ…DHVR). Residues 1160–1176 (LSGLSTLTATSESSSIS) show a composition bias toward low complexity. A compositionally biased stretch (polar residues) spans 1212 to 1232 (QSWQPPQHVTHHQPLSRNASS). Residues 1242 to 1251 (DVKKSEEARR) show a composition bias toward basic and acidic residues. A helical transmembrane segment spans residues 1410–1430 (LMYIRAAGLPIITIFFITALI). The 295-residue stretch at 1421-1715 (ITIFFITALI…AVTKSPSELR (295 aa)) folds into the ABC transmembrane type-1 2 domain. The Extracellular portion of the chain corresponds to 1431 to 1468 (WQCLRVYTDIWLQQWSNVHGRVASKGHVVLHPSEQDHE). Residues 1469–1489 (VTYYFRMYAAISCVCIIMALV) traverse the membrane as a helical segment. Residues 1490–1558 (STPAGQYAGC…QRLLQFTLLC (69 aa)) are Cytoplasmic-facing. A helical membrane pass occupies residues 1559–1579 (LSAILINVTITPWILVLTLPI). Residues 1580-1655 (CGAYYLIQKF…YALLNTSHRW (76 aa)) lie on the Extracellular side of the membrane. The chain crosses the membrane as a helical span at residues 1656-1676 (LGVSLDYLGGCIVFVATVTAL). The Cytoplasmic portion of the chain corresponds to 1677–1718 (TAASVSCRRHYEATTSPSASASPSPFETYAVTKSPSELRPSP). A helical transmembrane segment spans residues 1719-1739 (SLVGLAINYTLLVPIYLNWVV). The Extracellular segment spans residues 1740-2171 (KLLADMEMYA…GLLEKGASKW (432 aa)). Acidic residues predominate over residues 1766–1778 (ADADADADADVDA). Disordered stretches follow at residues 1766-1844 (ADAD…GHEN) and 1866-1902 (NFHHPPATAGDKVEQATTKTSVIKDKQLPPQQDDKDK). Composition is skewed to basic and acidic residues over residues 1793–1804 (EVDRSSQSDAGD) and 1887–1902 (VIKDKQLPPQQDDKDK). The 236-residue stretch at 1930–2165 (IHFDNVSLRY…EGSVFRGLLE (236 aa)) folds into the ABC transporter 2 domain. 1964 to 1971 (GRTGSGKS) contributes to the ATP binding site.

This sequence belongs to the ABC transporter superfamily. ABCC family. Conjugate transporter (TC 3.A.1.208) subfamily. As to expression, highly expressed in adult heart. Detected at lower levels in head and abdomen.

It is found in the membrane. Functionally, may function as regulatory subunit of ATP-sensitive potassium channels (KATP) and form KATP channels with a member of the ATP-sensitive inward rectifier potassium channel family. May also have channel activity by itself (in vitro). May protect the heart during hypoxia. May protect against heart failure under conditions of tachycardic stress. This chain is ATP-binding cassette sub-family C member Sur (Sur), found in Drosophila melanogaster (Fruit fly).